Reading from the N-terminus, the 105-residue chain is Large ribosomal subunit protein bL21 (105 aa).

It belongs to the bacterial ribosomal protein bL21 family. In terms of assembly, part of the 50S ribosomal subunit. Contacts protein L20.

Its function is as follows. This protein binds to 23S rRNA in the presence of protein L20. This is Large ribosomal subunit protein bL21 from Rickettsia bellii (strain OSU 85-389).